Consider the following 468-residue polypeptide: Glutamate--tRNA ligase (468 aa).

The 'HIGH' region signature appears at proline 8–threonine 18. Residues lysine 243–arginine 247 carry the 'KMSKS' region motif. An ATP-binding site is contributed by lysine 246.

This sequence belongs to the class-I aminoacyl-tRNA synthetase family. Glutamate--tRNA ligase type 1 subfamily. Monomer.

Its subcellular location is the cytoplasm. The enzyme catalyses tRNA(Glu) + L-glutamate + ATP = L-glutamyl-tRNA(Glu) + AMP + diphosphate. Catalyzes the attachment of glutamate to tRNA(Glu) in a two-step reaction: glutamate is first activated by ATP to form Glu-AMP and then transferred to the acceptor end of tRNA(Glu). The sequence is that of Glutamate--tRNA ligase from Thermus thermophilus (strain ATCC BAA-163 / DSM 7039 / HB27).